The sequence spans 350 residues: uncharacterized protein (350 aa).

In terms of biological role, may play a role in septum formation. This is an uncharacterized protein from Mycobacterium tuberculosis (strain CDC 1551 / Oshkosh).